The sequence spans 149 residues: MVRVMATGVFDILHPGHVLFLREARKLGDELVVVVARDSTVERLKHKPIMNEDIRRFMVESLKPVDRAVLGHKDDMYKTVEDVRPDIIVLGYDQKFDEKEIEEECRKRGIKVKVVRLKKYGDSDLNGTRKIIFKIVDRVDDLYAKDRNS.

Residues 9 to 10 (VF), 14 to 17 (HPGH), Asp-93, and Tyr-120 contribute to the ATP site.

It belongs to the archaeal FAD synthase family. As to quaternary structure, homodimer. It depends on a divalent metal cation as a cofactor.

The catalysed reaction is FMN + ATP + H(+) = FAD + diphosphate. It functions in the pathway cofactor biosynthesis; FAD biosynthesis; FAD from FMN: step 1/1. Functionally, catalyzes the transfer of the AMP portion of ATP to flavin mononucleotide (FMN) to produce flavin adenine dinucleotide (FAD) coenzyme. This chain is FAD synthase, found in Aciduliprofundum boonei (strain DSM 19572 / T469).